The following is a 376-amino-acid chain: Thiol-disulfide oxidoreductase LTO1 (376 aa).

The N-terminal 45 residues, 1 to 45 (MMARFVSVSSCQFHFGFREVSPPSVTSYPRRFEVSDRRFPAIPIK), are a transit peptide targeting the chloroplast. A disordered region spans residues 44–77 (IKCSSSEPENGEDSAPSLSSSSSSSTSEVSTSNS). Residues 46 to 81 (CSSSEPENGEDSAPSLSSSSSSSTSEVSTSNSSTYN) lie on the Stromal side of the membrane. The span at 57 to 77 (SAPSLSSSSSSSTSEVSTSNS) shows a compositional bias: low complexity. The helical transmembrane segment at 82–102 (WYTGIGGIGMLDTAYLTYLKV) threads the bilayer. Residues 103–125 (TGSDAFCPIGGGTCGDVLNSDYA) lie on the Lumenal side of the membrane. Cysteines 109 and 116 form a disulfide. A helical membrane pass occupies residues 126–146 (VVFGVPLPVIGFVMYGVVTAL). Topologically, residues 147–165 (SAELGEGNLPFGISKSNGR) are stromal. The chain crosses the membrane as a helical span at residues 166–186 (FALFGITTAMASASAYFLYIL). The Lumenal portion of the chain corresponds to 187 to 192 (STKLSG). Residues 193-213 (SSCLYCLVSAFLSFSLFFLSV) form a helical membrane-spanning segment. A disulfide bond links Cys-195 and Cys-198. At 214–223 (KDVKLQEIQQ) the chain is on the stromal side. Residues 224–244 (VVGLQICLAIIVVASLTASYS) traverse the membrane as a helical segment. At 245–376 (TAQPIPSRSG…DQANETNQLQ (132 aa)) the chain is on the lumenal side. 2 disulfide bridges follow: Cys-293–Cys-296 and Cys-316–Cys-331.

Belongs to the VKOR family. As to quaternary structure, interacts with the PSII subunits PSBO1 and PSBO2. Interacts with TL17, TL20.3, HCF164, PETJ, VDE1, EDA3, FKBP13 and FKBP20-2. Expressed in cotyledons, rosette leaves, stems, cauline leaves and flowers.

Its subcellular location is the plastid. It localises to the chloroplast thylakoid membrane. In terms of biological role, thiol-disulfide oxidoreductase catalyzing disulfide bond formation of chloroplast proteins and involved in redox regulation and photosynthetic electron transport. Required for the assembly of photosystem II (PSII) through the formation of disulfide bond in PSBO, a subunit of the PSII oxygen-evolving complex in the thylakoid lumen. Involved in the formation of disulfide bonds in the lumenal protein FKBP13. In vitro, reduces phylloquinone (vitamin K1) and menaquinone (vitamin K2) to their respective quinol. Cannot reduce phylloquinone epoxide to phylloquinone. Plays an important role in regulating the thylakoid lumen redox. The chain is Thiol-disulfide oxidoreductase LTO1 from Arabidopsis thaliana (Mouse-ear cress).